Reading from the N-terminus, the 193-residue chain is Ion-translocating oxidoreductase complex subunit A (193 aa).

6 consecutive transmembrane segments (helical) span residues 5 to 25 (ALLFVSILLVNNFVLVKFLGL), 39 to 59 (IGMGMATTFVMTLGSMFSWLI), 62 to 82 (FILVPLDILYLRTMAFILVLA), 102 to 122 (LLGIFLPLITTNCAVLGVVLL), 134 to 154 (TIYGFGGAAGFSLVMVLFAAI), and 171 to 191 (SIALITAGLMSLAFMGFTGLV).

The protein belongs to the NqrDE/RnfAE family. As to quaternary structure, the complex is composed of six subunits: RnfA, RnfB, RnfC, RnfD, RnfE and RnfG.

It is found in the cell inner membrane. Functionally, part of a membrane-bound complex that couples electron transfer with translocation of ions across the membrane. The polypeptide is Ion-translocating oxidoreductase complex subunit A (Pectobacterium atrosepticum (strain SCRI 1043 / ATCC BAA-672) (Erwinia carotovora subsp. atroseptica)).